We begin with the raw amino-acid sequence, 375 residues long: Probable UDP-N-acetylglucosamine 2-epimerase (375 aa).

Belongs to the UDP-N-acetylglucosamine 2-epimerase family.

It is found in the cytoplasm. It carries out the reaction UDP-N-acetyl-alpha-D-glucosamine = UDP-N-acetyl-alpha-D-mannosamine. The protein operates within glycan metabolism; exopolysaccharide EPS I biosynthesis. May be involved in synthesis of N-acetyltrideoxygalactose, a component of exopolysaccharide EPS I which functions as a virulence factor. The sequence is that of Probable UDP-N-acetylglucosamine 2-epimerase (epsC) from Ralstonia nicotianae (strain ATCC BAA-1114 / GMI1000) (Ralstonia solanacearum).